A 400-amino-acid chain; its full sequence is tRNA(Ile)-lysidine synthase (400 aa).

Residue 25–30 coordinates ATP; sequence SGGVDS.

The protein belongs to the tRNA(Ile)-lysidine synthase family.

The protein resides in the cytoplasm. It catalyses the reaction cytidine(34) in tRNA(Ile2) + L-lysine + ATP = lysidine(34) in tRNA(Ile2) + AMP + diphosphate + H(+). Ligates lysine onto the cytidine present at position 34 of the AUA codon-specific tRNA(Ile) that contains the anticodon CAU, in an ATP-dependent manner. Cytidine is converted to lysidine, thus changing the amino acid specificity of the tRNA from methionine to isoleucine. The protein is tRNA(Ile)-lysidine synthase of Francisella philomiragia subsp. philomiragia (strain ATCC 25017 / CCUG 19701 / FSC 153 / O#319-036).